The primary structure comprises 239 residues: Purine nucleoside phosphorylase DeoD-type (239 aa).

H5 is a binding site for a purine D-ribonucleoside. Phosphate is bound by residues G21, R25, R44, and 88–91; that span reads RVGS. Residues 180–182 and 204–205 contribute to the a purine D-ribonucleoside site; these read EME and SD. The active-site Proton donor is D205.

The protein belongs to the PNP/UDP phosphorylase family. Homohexamer; trimer of homodimers.

It carries out the reaction a purine D-ribonucleoside + phosphate = a purine nucleobase + alpha-D-ribose 1-phosphate. The enzyme catalyses a purine 2'-deoxy-D-ribonucleoside + phosphate = a purine nucleobase + 2-deoxy-alpha-D-ribose 1-phosphate. Functionally, catalyzes the reversible phosphorolytic breakdown of the N-glycosidic bond in the beta-(deoxy)ribonucleoside molecules, with the formation of the corresponding free purine bases and pentose-1-phosphate. The polypeptide is Purine nucleoside phosphorylase DeoD-type (Salmonella arizonae (strain ATCC BAA-731 / CDC346-86 / RSK2980)).